Reading from the N-terminus, the 407-residue chain is Imidazolonepropionase (407 aa).

The Fe(3+) site is built by histidine 68 and histidine 70. 2 residues coordinate Zn(2+): histidine 68 and histidine 70. Positions 77, 140, and 173 each coordinate 4-imidazolone-5-propanoate. Tyrosine 140 serves as a coordination point for N-formimidoyl-L-glutamate. Fe(3+) is bound at residue histidine 238. Histidine 238 is a Zn(2+) binding site. Glutamine 241 contacts 4-imidazolone-5-propanoate. Aspartate 313 is a binding site for Fe(3+). Position 313 (aspartate 313) interacts with Zn(2+). The N-formimidoyl-L-glutamate site is built by asparagine 315 and glycine 317. Threonine 318 contacts 4-imidazolone-5-propanoate.

Belongs to the metallo-dependent hydrolases superfamily. HutI family. The cofactor is Zn(2+). Fe(3+) is required as a cofactor.

It localises to the cytoplasm. The catalysed reaction is 4-imidazolone-5-propanoate + H2O = N-formimidoyl-L-glutamate. It participates in amino-acid degradation; L-histidine degradation into L-glutamate; N-formimidoyl-L-glutamate from L-histidine: step 3/3. Catalyzes the hydrolytic cleavage of the carbon-nitrogen bond in imidazolone-5-propanoate to yield N-formimidoyl-L-glutamate. It is the third step in the universal histidine degradation pathway. The sequence is that of Imidazolonepropionase from Burkholderia ambifaria (strain MC40-6).